We begin with the raw amino-acid sequence, 457 residues long: Argininosuccinate lyase (457 aa).

The protein belongs to the lyase 1 family. Argininosuccinate lyase subfamily.

The protein resides in the cytoplasm. It catalyses the reaction 2-(N(omega)-L-arginino)succinate = fumarate + L-arginine. It participates in amino-acid biosynthesis; L-arginine biosynthesis; L-arginine from L-ornithine and carbamoyl phosphate: step 3/3. This chain is Argininosuccinate lyase, found in Shigella sonnei (strain Ss046).